The sequence spans 1363 residues: ABC multidrug transporter MDR2 (1363 aa).

Residues 65-85 (IALIVIGTIAGIGAGIPFPLL) form a helical membrane-spanning segment. The ABC transmembrane type-1 1 domain occupies 69 to 367 (VIGTIAGIGA…MAPFMHIFAS (299 aa)). N-linked (GlcNAc...) asparagine glycosylation is present at N97. Transmembrane regions (helical) follow at residues 119–139 (VLQV…HTGC), 193–213 (KVGL…VAFL), 215–235 (VATI…MAFG), 301–321 (IQFG…FWQG), and 336–356 (VSVG…FVLS). Positions 403 to 682 (IELQDVTFNY…DGVYAGMVRL (280 aa)) constitute an ABC transporter 1 domain. 438-445 (GTSGSGKS) is a binding site for ATP. Residues N552 and N633 are each glycosylated (N-linked (GlcNAc...) asparagine). The interval 738–758 (YMPEEADSLPTEPENEKEKPK) is disordered. 3 consecutive transmembrane segments (helical) span residues 781–801 (LGLI…VIFG), 820–840 (GMLF…AVIV), and 896–916 (LTGT…AGVI). Positions 781-1052 (LGLITSIMIG…MFALVPDISK (272 aa)) constitute an ABC transmembrane type-1 2 domain. N-linked (GlcNAc...) asparagine glycosylation occurs at N973. 2 helical membrane-spanning segments follow: residues 992–1012 (FWLS…YWWG) and 1016–1036 (ILAG…LLFS). The 240-residue stretch at 1119 to 1358 (VQFRNVHFRY…CESYRANVIH (240 aa)) folds into the ABC transporter 2 domain. 1154–1161 (GPSGSGKS) serves as a coordination point for ATP.

The protein belongs to the ABC transporter superfamily. ABCB family. Multidrug resistance exporter (TC 3.A.1.201) subfamily.

It is found in the cell membrane. Pleiotropic ABC efflux transporter that may be involved in the modulation susceptibility to a wide range of unrelated cytotoxic compounds. In Trichophyton tonsurans (strain CBS 112818) (Scalp ringworm fungus), this protein is ABC multidrug transporter MDR2.